The chain runs to 293 residues: Putative metal ABC transporter substrate-binding protein Hpf (293 aa).

A signal peptide spans 1 to 22 (MRNSFKIMTALALGLFAMQANA). The interaction with host components stretch occupies residues 23–48 (KFKVVTTFTVIQDIAQNVAGNAATVE). Residues His-58, His-123, Glu-189, and Asp-264 each contribute to the a divalent metal cation site.

It belongs to the bacterial solute-binding protein 9 family. As to quaternary structure, interacts with host laminin and vitronectin. Can interact with both immobilized and soluble vitronectin.

The protein resides in the cell outer membrane. It is found in the cell surface. Its subcellular location is the periplasm. Its function is as follows. Part of an ATP-binding cassette (ABC) transport system involved in metal import. Binds a metal with high affinity and specificity and delivers it to the membrane permease for translocation into the cytoplasm. Acts as an adhesin that promotes binding of H.influenzae to host laminin and vitronectin. In addition, interaction with serum vitronectin plays an important role in bacterial serum resistance. The sequence is that of Putative metal ABC transporter substrate-binding protein Hpf (hpf) from Haemophilus influenzae (strain NTHi 3655).